Here is a 361-residue protein sequence, read N- to C-terminus: Peptide chain release factor 1 (361 aa).

An N5-methylglutamine modification is found at Q235. A disordered region spans residues 284–306; it reads SQQATAEAMTRKLQVGSGDRSQR.

Belongs to the prokaryotic/mitochondrial release factor family. Post-translationally, methylated by PrmC. Methylation increases the termination efficiency of RF1.

It is found in the cytoplasm. In terms of biological role, peptide chain release factor 1 directs the termination of translation in response to the peptide chain termination codons UAG and UAA. In Xylella fastidiosa (strain 9a5c), this protein is Peptide chain release factor 1.